A 365-amino-acid chain; its full sequence is Flagellar P-ring protein (365 aa).

An N-terminal signal peptide occupies residues Met1–Ala19.

The protein belongs to the FlgI family. As to quaternary structure, the basal body constitutes a major portion of the flagellar organelle and consists of four rings (L,P,S, and M) mounted on a central rod.

Its subcellular location is the periplasm. The protein resides in the bacterial flagellum basal body. Assembles around the rod to form the L-ring and probably protects the motor/basal body from shearing forces during rotation. This is Flagellar P-ring protein from Escherichia fergusonii (strain ATCC 35469 / DSM 13698 / CCUG 18766 / IAM 14443 / JCM 21226 / LMG 7866 / NBRC 102419 / NCTC 12128 / CDC 0568-73).